Reading from the N-terminus, the 385-residue chain is Protein pelota homolog (385 aa).

Lys162 participates in a covalent cross-link: Glycyl lysine isopeptide (Lys-Gly) (interchain with G-Cter in SUMO2). Phosphoserine occurs at positions 374, 380, 381, and 382.

The protein belongs to the eukaryotic release factor 1 family. Pelota subfamily. Component of the Pelota-HBS1L complex, also named Dom34-Hbs1 complex, composed of PELO and HBS1L. Interacts with PINK1. Interacts with ABCE1. Interacts with CNOT4. The cofactor is a divalent metal cation.

The protein localises to the cytoplasm. Functionally, component of the Pelota-HBS1L complex, a complex that recognizes stalled ribosomes and triggers the No-Go Decay (NGD) pathway. In the Pelota-HBS1L complex, PELO recognizes ribosomes stalled at the 3' end of an mRNA and engages stalled ribosomes by destabilizing mRNA in the mRNA channel. Following mRNA extraction from stalled ribosomes by the SKI complex, the Pelota-HBS1L complex promotes recruitment of ABCE1, which drives the disassembly of stalled ribosomes, followed by degradation of damaged mRNAs as part of the NGD pathway. As part of the PINK1-regulated signaling, upon mitochondrial damage is recruited to the ribosome/mRNA-ribonucleoprotein complex associated to mitochondrial outer membrane thereby enabling the recruitment of autophagy receptors and induction of mitophagy. This Pongo abelii (Sumatran orangutan) protein is Protein pelota homolog (PELO).